The sequence spans 150 residues: MSQLIFSQPSEDKSALEDAGDFTPRFDDRGLITAIVTDAGDGELLMVAHMNAQALALTIQTGTAHYFSRSRGKIWKKGETSGNLQTVKEIRTDCDQDAIWLKVEVAGHDATCHTGRRSCFYRTIALRDGKPMLDIVDDERHFDPQDVYGK.

Aspartate 93 contributes to the Mg(2+) binding site. Cysteine 94 contacts Zn(2+). Aspartate 95 and aspartate 97 together coordinate Mg(2+). Residues cysteine 112 and cysteine 119 each contribute to the Zn(2+) site.

Belongs to the PRA-CH family. Homodimer. Mg(2+) is required as a cofactor. Requires Zn(2+) as cofactor.

It localises to the cytoplasm. It catalyses the reaction 1-(5-phospho-beta-D-ribosyl)-5'-AMP + H2O = 1-(5-phospho-beta-D-ribosyl)-5-[(5-phospho-beta-D-ribosylamino)methylideneamino]imidazole-4-carboxamide. It functions in the pathway amino-acid biosynthesis; L-histidine biosynthesis; L-histidine from 5-phospho-alpha-D-ribose 1-diphosphate: step 3/9. Catalyzes the hydrolysis of the adenine ring of phosphoribosyl-AMP. The sequence is that of Phosphoribosyl-AMP cyclohydrolase from Rhizobium leguminosarum bv. trifolii (strain WSM2304).